The chain runs to 465 residues: Gamma-aminobutyric acid receptor subunit gamma-1 (465 aa).

A signal peptide spans 1–20 (MGSGKVFLFSPSLLWSQTRG). Residues 21–273 (VRLIFLLLTL…FDLSRRMGYF (253 aa)) lie on the Extracellular side of the membrane. N-linked (GlcNAc...) asparagine glycans are attached at residues N50 and N127. C188 and C202 are joined by a disulfide. N245 carries N-linked (GlcNAc...) asparagine glycosylation. A helical transmembrane segment spans residues 274 to 294 (TIQTYIPCILTVVLSWVSFWI). At 295 to 300 (NKDAVP) the chain is on the cytoplasmic side. A helical membrane pass occupies residues 301–320 (ARTSLGITTVLTMTTLSTIA). At 321 to 328 (RKSLPKVS) the chain is on the extracellular side. The chain crosses the membrane as a helical span at residues 329-349 (YVTAMDLFVSVCFIFVFAALM). At 350–444 (EYGTLHYFTS…RIAKIDSYSR (95 aa)) the chain is on the cytoplasmic side. The helical transmembrane segment at 445-465 (IFFPTAFALFNLVYWVGYLYL) threads the bilayer.

Belongs to the ligand-gated ion channel (TC 1.A.9) family. Gamma-aminobutyric acid receptor (TC 1.A.9.5) subfamily. GABRG1 sub-subfamily. Heteropentamer, formed by a combination of alpha (GABRA1-6), beta (GABRB1-3), gamma (GABRG1-3), delta (GABRD), epsilon (GABRE), rho (GABRR1-3), pi (GABRP) and theta (GABRQ) chains, each subunit exhibiting distinct physiological and pharmacological properties. Post-translationally, may be palmitoylated. Expressed in brain.

It is found in the postsynaptic cell membrane. It localises to the cell membrane. The catalysed reaction is chloride(in) = chloride(out). Its function is as follows. Gamma subunit of the heteropentameric ligand-gated chloride channel gated by gamma-aminobutyric acid (GABA), a major inhibitory neurotransmitter in the brain. GABA-gated chloride channels, also named GABA(A) receptors (GABAAR), consist of five subunits arranged around a central pore and contain GABA active binding site(s) located at the alpha and beta subunit interface(s). When activated by GABA, GABAARs selectively allow the flow of chloride anions across the cell membrane down their electrochemical gradient. Chloride influx into the postsynaptic neuron following GABAAR opening decreases the neuron ability to generate a new action potential, thereby reducing nerve transmission. The chain is Gamma-aminobutyric acid receptor subunit gamma-1 from Rattus norvegicus (Rat).